Reading from the N-terminus, the 464-residue chain is Armadillo repeat-containing protein 6 homolog (464 aa).

Position 9 is a phosphothreonine (T9). ARM repeat units follow at residues 235 to 275, 287 to 331, 332 to 374, and 375 to 418; these read AHEH…TLAV, GGLK…QQGV, APII…FDTG, and IAEV…ISFG.

This sequence belongs to the ARMC6 family.

This chain is Armadillo repeat-containing protein 6 homolog, found in Drosophila melanogaster (Fruit fly).